The sequence spans 222 residues: Pyrrolidone-carboxylate peptidase (222 aa).

Catalysis depends on residues E80, C146, and H170.

It belongs to the peptidase C15 family. Homotetramer.

The protein resides in the cytoplasm. The catalysed reaction is Release of an N-terminal pyroglutamyl group from a polypeptide, the second amino acid generally not being Pro.. In terms of biological role, removes 5-oxoproline from various penultimate amino acid residues except L-proline. In Mycobacterium marinum (strain ATCC BAA-535 / M), this protein is Pyrrolidone-carboxylate peptidase.